Reading from the N-terminus, the 553-residue chain is Hydroxylamine reductase (553 aa).

[2Fe-2S] cluster is bound by residues cysteine 3, cysteine 6, cysteine 18, and cysteine 25. Residues histidine 252, glutamate 276, cysteine 320, cysteine 408, cysteine 436, cysteine 461, glutamate 495, and lysine 497 each contribute to the hybrid [4Fe-2O-2S] cluster site. Cysteine 408 bears the Cysteine persulfide mark.

Belongs to the HCP family. Requires [2Fe-2S] cluster as cofactor. The cofactor is hybrid [4Fe-2O-2S] cluster.

The protein resides in the cytoplasm. The catalysed reaction is A + NH4(+) + H2O = hydroxylamine + AH2 + H(+). Catalyzes the reduction of hydroxylamine to form NH(3) and H(2)O. The protein is Hydroxylamine reductase of Vibrio parahaemolyticus serotype O3:K6 (strain RIMD 2210633).